The chain runs to 219 residues: Imidazole glycerol phosphate synthase subunit HisH (219 aa).

The 213-residue stretch at 4 to 216 (TVTVLDYGSG…VDSLPATGRN (213 aa)) folds into the Glutamine amidotransferase type-1 domain. Cys-82 functions as the Nucleophile in the catalytic mechanism. Residues His-191 and Glu-193 contribute to the active site.

Heterodimer of HisH and HisF.

It localises to the cytoplasm. The enzyme catalyses 5-[(5-phospho-1-deoxy-D-ribulos-1-ylimino)methylamino]-1-(5-phospho-beta-D-ribosyl)imidazole-4-carboxamide + L-glutamine = D-erythro-1-(imidazol-4-yl)glycerol 3-phosphate + 5-amino-1-(5-phospho-beta-D-ribosyl)imidazole-4-carboxamide + L-glutamate + H(+). The catalysed reaction is L-glutamine + H2O = L-glutamate + NH4(+). The protein operates within amino-acid biosynthesis; L-histidine biosynthesis; L-histidine from 5-phospho-alpha-D-ribose 1-diphosphate: step 5/9. IGPS catalyzes the conversion of PRFAR and glutamine to IGP, AICAR and glutamate. The HisH subunit catalyzes the hydrolysis of glutamine to glutamate and ammonia as part of the synthesis of IGP and AICAR. The resulting ammonia molecule is channeled to the active site of HisF. The protein is Imidazole glycerol phosphate synthase subunit HisH of Renibacterium salmoninarum (strain ATCC 33209 / DSM 20767 / JCM 11484 / NBRC 15589 / NCIMB 2235).